The chain runs to 672 residues: 2,4-dienoyl-CoA reductase [(2E)-enoyl-CoA-producing] (672 aa).

FMN contacts are provided by residues serine 25–histidine 27, glycine 59, and glutamine 101. Tyrosine 167 functions as the Proton donor in the catalytic mechanism. Arginine 176 contacts substrate. An FMN-binding site is contributed by arginine 215. A substrate-binding site is contributed by histidine 253 to arginine 256. FMN contacts are provided by residues arginine 289 and alanine 311–arginine 312. Residues cysteine 335 and cysteine 338 each contribute to the [4Fe-4S] cluster site. Glutamine 340 serves as a coordination point for FAD. Glutamine 340 lines the NADP(+) pocket. [4Fe-4S] cluster is bound by residues cysteine 342 and cysteine 354. FAD-binding residues include alanine 385, aspartate 404, glutamine 412, lysine 422, and valine 449. Arginine 563–lysine 564 is a binding site for NADP(+). Substrate contacts are provided by lysine 567 and tryptophan 578. FAD-binding positions include glycine 649 and leucine 656–alanine 658. Position 654-656 (methionine 654–leucine 656) interacts with NADP(+).

It in the N-terminal section; belongs to the NADH:flavin oxidoreductase/NADH oxidase family. As to quaternary structure, monomer. FMN is required as a cofactor. It depends on FAD as a cofactor. [4Fe-4S] cluster serves as cofactor.

It catalyses the reaction a 4,5-saturated-(2E)-enoyl-CoA + NADP(+) = a (2E,4E)-dienoyl-CoA + NADPH + H(+). It carries out the reaction a (2E,4Z)-dienoyl-CoA + NADPH + H(+) = a 4,5-saturated-(2E)-enoyl-CoA + NADP(+). The catalysed reaction is (2E)-decenoyl-CoA + NADP(+) = (2E,4E)-decadienoyl-CoA + NADPH + H(+). The enzyme catalyses (2E)-decenoyl-CoA + NADP(+) = (2E,4Z)-decadienoyl-CoA + NADPH + H(+). It functions in the pathway lipid metabolism; fatty acid beta-oxidation. With respect to regulation, is non-competitively inhibited by NADH. Functions as an auxiliary enzyme in the beta-oxidation of unsaturated fatty acids with double bonds at even carbon positions. Catalyzes the NADPH-dependent reduction of the C4-C5 double bond of the acyl chain of 2,4-dienoyl-CoA to yield 2-trans-enoyl-CoA. Acts on both isomers, 2-trans,4-cis- and 2-trans,4-trans-decadienoyl-CoA, with almost equal efficiency. Is not active with NADH instead of NADPH. Does not show cis-&gt;trans isomerase activity. The chain is 2,4-dienoyl-CoA reductase [(2E)-enoyl-CoA-producing] from Escherichia coli (strain K12).